The primary structure comprises 258 residues: Synaptosomal-associated protein 29 (258 aa).

Residues 1-43 (MSAYPRSYNPFDEDAEDEDARPAPWSDSRDLADGPGAPADRQQ) are disordered. 3 positions are modified to phosphoserine: Ser-65, Ser-77, and Ser-114. A coiled-coil region spans residues 76–107 (VSAEELVRQRGALERTEKMVDKMEQDLKTSQK). 2 disordered regions span residues 127 to 147 (PAETPSAQNGTLTPQPSGRLK) and 161 to 188 (QASHPNLRKLQDSDSIPGGAGSAVSSEA). Thr-130 and Thr-137 each carry phosphothreonine. The span at 131–142 (PSAQNGTLTPQP) shows a compositional bias: polar residues. Residues Ser-163, Ser-182, Ser-185, Ser-204, and Ser-210 each carry the phosphoserine modification. A t-SNARE coiled-coil homology domain is found at 196–258 (RACHQRIDSN…TSTERKVRQL (63 aa)).

Belongs to the SNAP-25 family. In terms of assembly, forms a SNARE complex, composed of VAMP8, SNAP29 and STX17, involved in fusion of autophagosome with lysosome. Interacts with multiple syntaxins including STX6. Interacts with EIPR1. Interacts with STX17; this interaction is increased in the absence of TMEM39A.

The protein resides in the cytoplasm. It localises to the golgi apparatus membrane. Its subcellular location is the cytoplasmic vesicle. The protein localises to the autophagosome membrane. It is found in the cell projection. The protein resides in the cilium membrane. In terms of biological role, SNAREs, soluble N-ethylmaleimide-sensitive factor-attachment protein receptors, are essential proteins for fusion of cellular membranes. SNAREs localized on opposing membranes assemble to form a trans-SNARE complex, an extended, parallel four alpha-helical bundle that drives membrane fusion. SNAP29 is a SNARE involved in autophagy through the direct control of autophagosome membrane fusion with the lysososome membrane. Also plays a role in ciliogenesis by regulating membrane fusions. The sequence is that of Synaptosomal-associated protein 29 from Bos taurus (Bovine).